Here is a 127-residue protein sequence, read N- to C-terminus: Large ribosomal subunit protein bL17 (127 aa).

The protein belongs to the bacterial ribosomal protein bL17 family. In terms of assembly, part of the 50S ribosomal subunit. Contacts protein L32.

This chain is Large ribosomal subunit protein bL17, found in Lactiplantibacillus plantarum (strain ATCC BAA-793 / NCIMB 8826 / WCFS1) (Lactobacillus plantarum).